Consider the following 284-residue polypeptide: 2,3,4,5-tetrahydropyridine-2,6-dicarboxylate N-succinyltransferase (284 aa).

Positions 111 and 148 each coordinate substrate.

It belongs to the transferase hexapeptide repeat family. As to quaternary structure, homotrimer.

The protein localises to the cytoplasm. It carries out the reaction (S)-2,3,4,5-tetrahydrodipicolinate + succinyl-CoA + H2O = (S)-2-succinylamino-6-oxoheptanedioate + CoA. Its pathway is amino-acid biosynthesis; L-lysine biosynthesis via DAP pathway; LL-2,6-diaminopimelate from (S)-tetrahydrodipicolinate (succinylase route): step 1/3. The protein is 2,3,4,5-tetrahydropyridine-2,6-dicarboxylate N-succinyltransferase of Mesorhizobium japonicum (strain LMG 29417 / CECT 9101 / MAFF 303099) (Mesorhizobium loti (strain MAFF 303099)).